Reading from the N-terminus, the 942-residue chain is Isoleucine--tRNA ligase (942 aa).

A 'HIGH' region motif is present at residues 58–68 (PYANGDIHLGH). Residue Glu-567 coordinates L-isoleucyl-5'-AMP. Residues 608 to 612 (KMSKS) carry the 'KMSKS' region motif. ATP is bound at residue Lys-611. Cys-905, Cys-908, Cys-925, and Cys-928 together coordinate Zn(2+).

Belongs to the class-I aminoacyl-tRNA synthetase family. IleS type 1 subfamily. In terms of assembly, monomer. Requires Zn(2+) as cofactor.

The protein resides in the cytoplasm. It carries out the reaction tRNA(Ile) + L-isoleucine + ATP = L-isoleucyl-tRNA(Ile) + AMP + diphosphate. Catalyzes the attachment of isoleucine to tRNA(Ile). As IleRS can inadvertently accommodate and process structurally similar amino acids such as valine, to avoid such errors it has two additional distinct tRNA(Ile)-dependent editing activities. One activity is designated as 'pretransfer' editing and involves the hydrolysis of activated Val-AMP. The other activity is designated 'posttransfer' editing and involves deacylation of mischarged Val-tRNA(Ile). This is Isoleucine--tRNA ligase from Pseudoalteromonas translucida (strain TAC 125).